An 862-amino-acid polypeptide reads, in one-letter code: Active breakpoint cluster region-related protein (862 aa).

The tract at residues 30-84 (DAEGNEEHKSSREGSETMPYIDESPTMSPQLSARSQDSVDGVSPTPTEVLLPGGE) is disordered. A compositionally biased stretch (basic and acidic residues) spans 34–44 (NEEHKSSREGS). Residues 54–67 (PTMSPQLSARSQDS) are compositionally biased toward polar residues. The region spanning 93–286 (MRKLVLSGVL…QNFLSSINED (194 aa)) is the DH domain. The PH domain occupies 303 to 462 (QLVKDGFLVE…WREAIQKLQK (160 aa)). In terms of domain architecture, C2 spans 488 to 616 (VHNVPIISHK…QSKNWHDDVI (129 aa)). Residues 650-848 (VKISVVTKRE…YYLQHPPISF (199 aa)) form the Rho-GAP domain.

It localises to the cell projection. The protein localises to the dendritic spine. The protein resides in the axon. It is found in the synapse. Protein with a unique structure having two opposing regulatory activities toward small GTP-binding proteins. The C-terminus is a GTPase-activating protein domain which stimulates GTP hydrolysis by RAC1, RAC2 and CDC42. Accelerates the intrinsic rate of GTP hydrolysis of RAC1 or CDC42, leading to down-regulation of the active GTP-bound form. The central Dbl homology (DH) domain functions as guanine nucleotide exchange factor (GEF) that modulates the GTPases CDC42, RHOA and RAC1. Promotes the conversion of CDC42, RHOA and RAC1 from the GDP-bound to the GTP-bound form. This chain is Active breakpoint cluster region-related protein (abr), found in Xenopus tropicalis (Western clawed frog).